The following is a 179-amino-acid chain: Protein HoxT (179 aa).

In Cupriavidus necator (strain ATCC 17699 / DSM 428 / KCTC 22496 / NCIMB 10442 / H16 / Stanier 337) (Ralstonia eutropha), this protein is Protein HoxT (hoxT).